A 101-amino-acid chain; its full sequence is Small ribosomal subunit protein uS14 (101 aa).

Belongs to the universal ribosomal protein uS14 family. As to quaternary structure, part of the 30S ribosomal subunit. Contacts proteins S3 and S10.

In terms of biological role, binds 16S rRNA, required for the assembly of 30S particles and may also be responsible for determining the conformation of the 16S rRNA at the A site. This Sodalis glossinidius (strain morsitans) protein is Small ribosomal subunit protein uS14.